Consider the following 882-residue polypeptide: Cadherin-1 (882 aa).

A signal peptide spans 1–22; that stretch reads MGPWSRSLSALLLLLQVSSWLC. The propeptide occupies 23–154; sequence QEPEPCHPGF…SSSGLRRRKR (132 aa). Asn144 is a glycosylation site (N-linked (GlcNAc...) asparagine). 5 consecutive Cadherin domains span residues 155-262, 263-375, 376-486, 487-593, and 594-697; these read DWVI…KPEF, TQEV…PPVF, NPTT…APIF, VPPE…DNAP, and IPEP…VCKK. Over 155 to 709 the chain is Extracellular; that stretch reads DWVIPPISCP…PIEAGLQIPA (555 aa). Ca(2+) is bound at residue Asp257. Residue Ser280 is glycosylated (O-linked (Man...) serine). Residue Thr285 is glycosylated (O-linked (Man...) threonine). Position 288 (Asp288) interacts with Ca(2+). Residues Thr358, Thr470, Thr472, and Thr509 are each glycosylated (O-linked (Man...) threonine). N-linked (GlcNAc...) asparagine glycosylation occurs at Asn558. Thr576, Thr578, and Thr580 each carry an O-linked (Man...) threonine glycan. An N-linked (GlcNAc...) asparagine glycan is attached at Asn637. The chain crosses the membrane as a helical span at residues 710-730; sequence ILGILGGILALLILILLLLLF. At 731–882 the chain is on the cytoplasmic side; the sequence is LRRRAVVKEP…ADMYGGGEDD (152 aa). The tract at residues 747–767 is disordered; it reads DTRDNVYYYDEEGGGEEDQDF. Phosphotyrosine; by SRC occurs at positions 753, 754, and 755. Positions 755–767 are enriched in acidic residues; it reads YDEEGGGEEDQDF. The tract at residues 758-769 is required for binding CTNND1 and PSEN1; that stretch reads EGGGEEDQDFDL. Residues Ser770, Ser793, Ser838, Ser840, and Ser846 each carry the phosphoserine modification. The segment at 811 to 882 is required for binding alpha, beta and gamma catenins; it reads IDENLKAADT…ADMYGGGEDD (72 aa).

Homodimer; disulfide-linked. Component of an E-cadherin/ catenin adhesion complex composed of at least E-cadherin/CDH1, beta-catenin/CTNNB1 or gamma-catenin/JUP, and potentially alpha-catenin/CTNNA1; the complex is located to adherens junctions. Found in a complex composed of CDH1, RAP1A and PKP3; PKP3 acts as a scaffold protein within the complex, the complex is required for CDH1 localization to mature desmosome cell junctions. Interacts with the TRPV4 and CTNNB1 complex. Interacts with CTNND1. The stable association of CTNNA1 is controversial as CTNNA1 was shown not to bind to F-actin when assembled in the complex. Alternatively, the CTNNA1-containing complex may be linked to F-actin by other proteins such as LIMA1. Interaction with PSEN1, cleaves CDH1 resulting in the disassociation of cadherin-based adherens junctions (CAJs). Interacts with AJAP1 and DLGAP5. Interacts with TBC1D2. Interacts with LIMA1. Interacts with CAV1. Interacts with PIP5K1C. Interacts with RAB8B. Interacts with DDR1; this stabilizes CDH1 at the cell surface and inhibits its internalization. Interacts with RAPGEF2. Interacts with KLRG1. Forms a ternary complex composed of ADAM10, CADH1 and EPHA4; within the complex, CADH1 is cleaved by ADAM10 which disrupts adherens junctions. Interacts with SPEF1. Interacts with CTNNB1 and PKP2. Interacts with AMOTL2; the interaction may facilitate binding of radial actin fibers to cell junction complexes. Interacts with DSG3; the interaction is required for CDH1 localization to developing adherens junctions. Post-translationally, during apoptosis or with calcium influx, cleaved by a membrane-bound metalloproteinase (ADAM10), PS1/gamma-secretase and caspase-3. Processing by the metalloproteinase, induced by calcium influx, causes disruption of cell-cell adhesion and the subsequent release of beta-catenin into the cytoplasm. The residual membrane-tethered cleavage product is rapidly degraded via an intracellular proteolytic pathway. Cleavage by caspase-3 releases the cytoplasmic tail resulting in disintegration of the actin microfilament system. The gamma-secretase-mediated cleavage promotes disassembly of adherens junctions. During development of the cochlear organ of Corti, cleavage by ADAM10 at adherens junctions promotes pillar cell separation. N-glycosylation at Asn-637 is essential for expression, folding and trafficking. Addition of bisecting N-acetylglucosamine by MGAT3 modulates its cell membrane location. In terms of processing, ubiquitinated by a SCF complex containing SKP2, which requires prior phosphorylation by CK1/CSNK1A1. Ubiquitinated by CBLL1/HAKAI, requires prior phosphorylation at Tyr-754. Post-translationally, O-glycosylated. O-manosylated by TMTC1, TMTC2, TMTC3 or TMTC4. Thr-285 and Thr-509 are O-mannosylated by TMTC2 or TMTC4 but not TMTC1 or TMTC3.

It localises to the cell junction. The protein localises to the adherens junction. It is found in the cell membrane. Its subcellular location is the endosome. The protein resides in the golgi apparatus. It localises to the trans-Golgi network. The protein localises to the cytoplasm. It is found in the desmosome. Cadherins are calcium-dependent cell adhesion proteins. They preferentially interact with themselves in a homophilic manner in connecting cells; cadherins may thus contribute to the sorting of heterogeneous cell types. CDH1 is involved in mechanisms regulating cell-cell adhesions, mobility and proliferation of epithelial cells. Promotes organization of radial actin fiber structure and cellular response to contractile forces, via its interaction with AMOTL2 which facilitates anchoring of radial actin fibers to CDH1 junction complexes at the cell membrane. Plays a role in the early stages of desmosome cell-cell junction formation via facilitating the recruitment of DSG2 and DSP to desmosome plaques. Has a potent invasive suppressor role. It is a ligand for integrin alpha-E/beta-7. In terms of biological role, E-Cad/CTF2 promotes non-amyloidogenic degradation of Abeta precursors. Has a strong inhibitory effect on APP C99 and C83 production. The polypeptide is Cadherin-1 (CDH1) (Pongo abelii (Sumatran orangutan)).